The primary structure comprises 577 residues: 2-succinyl-5-enolpyruvyl-6-hydroxy-3-cyclohexene-1-carboxylate synthase (577 aa).

Belongs to the TPP enzyme family. MenD subfamily. Homodimer. The cofactor is Mg(2+). It depends on Mn(2+) as a cofactor. Requires thiamine diphosphate as cofactor.

It carries out the reaction isochorismate + 2-oxoglutarate + H(+) = 5-enolpyruvoyl-6-hydroxy-2-succinyl-cyclohex-3-ene-1-carboxylate + CO2. It functions in the pathway quinol/quinone metabolism; 1,4-dihydroxy-2-naphthoate biosynthesis; 1,4-dihydroxy-2-naphthoate from chorismate: step 2/7. The protein operates within quinol/quinone metabolism; menaquinone biosynthesis. Functionally, catalyzes the thiamine diphosphate-dependent decarboxylation of 2-oxoglutarate and the subsequent addition of the resulting succinic semialdehyde-thiamine pyrophosphate anion to isochorismate to yield 2-succinyl-5-enolpyruvyl-6-hydroxy-3-cyclohexene-1-carboxylate (SEPHCHC). The chain is 2-succinyl-5-enolpyruvyl-6-hydroxy-3-cyclohexene-1-carboxylate synthase from Christiangramia forsetii (strain DSM 17595 / CGMCC 1.15422 / KT0803) (Gramella forsetii).